The sequence spans 267 residues: Thiamine pyrophosphokinase 3 (267 aa).

The protein belongs to the thiamine pyrophosphokinase family.

The protein localises to the cytoplasm. The protein resides in the cytosol. It carries out the reaction thiamine + ATP = thiamine diphosphate + AMP + H(+). It functions in the pathway cofactor biosynthesis; thiamine diphosphate biosynthesis; thiamine diphosphate from thiamine: step 1/1. Functionally, catalyzes the phosphorylation of thiamine to thiamine pyrophosphate (TPP). TPP is an active cofactor for enzymes involved in glycolysis and energy production. Plant leaves require high levels of TPP for photosynthesis and carbohydrate metabolism. This Oryza sativa subsp. japonica (Rice) protein is Thiamine pyrophosphokinase 3 (TPK3).